The chain runs to 125 residues: Glycine cleavage system H protein (125 aa).

A Lipoyl-binding domain is found at 22–104 (VATVGITIHA…EGEGWLFKLK (83 aa)). The residue at position 63 (Lys63) is an N6-lipoyllysine.

Belongs to the GcvH family. As to quaternary structure, the glycine cleavage system is composed of four proteins: P, T, L and H. (R)-lipoate is required as a cofactor.

The glycine cleavage system catalyzes the degradation of glycine. The H protein shuttles the methylamine group of glycine from the P protein to the T protein. This chain is Glycine cleavage system H protein, found in Brucella abortus (strain 2308).